A 98-amino-acid chain; its full sequence is Large ribosomal subunit protein eL21 (98 aa).

A compositionally biased stretch (basic residues) spans 1–24 (MVKKAHSFRRKTRGKLSKHPRRRG). The segment at 1-27 (MVKKAHSFRRKTRGKLSKHPRRRGLPP) is disordered.

It belongs to the eukaryotic ribosomal protein eL21 family. As to quaternary structure, part of the 50S ribosomal subunit.

This is Large ribosomal subunit protein eL21 from Thermococcus kodakarensis (strain ATCC BAA-918 / JCM 12380 / KOD1) (Pyrococcus kodakaraensis (strain KOD1)).